We begin with the raw amino-acid sequence, 592 residues long: MEAITKNGSLSQTLVHCGPKSLSSFIPVRCLRFSKNPFPKKLVVTRARTSINSDHEAANRPLFQFPPSLLDDRFLSISANQSEIDSLGRDIEALKAKVSEKLVCMDVKERIHLIHLLVSLGVAYHFEKQIEEFLKVDFENVEDMNLGEEDMYSISVIFRVFRLYRHKLSSDVFNRFKEENGDFKKCLLDDVRGMLSFYEASYFGTNTEEILDEAMGFTRKHLELFVGGSNEEHLSGHIKNVLYLSQQENAEVVMSREYIQFYEQETHHDETLLKFAKINFKFMQLHYVQELQTIVKWWKELDLESKIPNYYRVRAVECLYWAMAVYMEPQYSVARIILSKSLVLWTIIDDLYDAYCTLPEAIAFTENMERWETDAKDMPDHMKVLMRSFIDLHEDFKREVILEGRLYSVEYGIDECKRLFREDLKLSKWARTGYIPNYDEYMEVGIVTAGIDMTVAFAFIGMGEAGKEAFDWIRSRPKFIQTLDIKGRLRDDVATYKDEMARGEIATGINCYMKQYKVTEEEAFLEFHRRIKHTSKLVNEEYFKTTVPLKLVRIAFNVGRAIDTNYKHGDGLTYGGIVEGQITSLFLDLITI.

The N-terminal 52 residues, 1 to 52 (MEAITKNGSLSQTLVHCGPKSLSSFIPVRCLRFSKNPFPKKLVVTRARTSIN), are a transit peptide targeting the chloroplast. Residues Asp349, Asp353, Asp491, Thr495, and Glu499 each coordinate Mg(2+). A DDXXD motif motif is present at residues 349–353 (DDLYD).

It belongs to the terpene synthase family. Tpsa subfamily. The cofactor is Mg(2+). Mn(2+) serves as cofactor.

It localises to the plastid. Its subcellular location is the chloroplast. The catalysed reaction is (2E,6E,10E)-geranylgeranyl diphosphate + H2O = (3E,7E)-dolabella-3,7-dien-18-ol + diphosphate. The enzyme catalyses (2E,6E,10E)-geranylgeranyl diphosphate = (3E,7E)-dolathalia-3,7,11-triene + diphosphate. Its pathway is secondary metabolite biosynthesis; terpenoid biosynthesis. Functionally, involved in the biosynthesis of diterpenes in roots. Possesses dolabella-3,7-dien-18-ol synthase activity and dolathalia-3,7,11-triene synthase activity in vitro. Catalyzes the formation of dolabella-3,7-dien-18-ol and dolathalia-3,7,11-triene from geranygeranyl diphosphate (GGPP). Does not seem to be involved in sesquiterpene biosynthesis. This is Bifunctional dolabella-3,7-dien-18-ol synthase/dolathalia-3,7,11-triene synthase TPS20, chloroplastic from Arabidopsis thaliana (Mouse-ear cress).